A 441-amino-acid polypeptide reads, in one-letter code: Sec-independent protein translocase protein TatCo (441 aa).

The segment at 1–185 is disordered; that stretch reads MADEERDAGL…LVGEAPESDQ (185 aa). Over residues 13–22 the composition is skewed to acidic residues; it reads ADDETDASDD. Residues 51–62 are compositionally biased toward basic and acidic residues; that stretch reads TPRDETVTHGSD. A compositionally biased stretch (acidic residues) spans 75 to 104; the sequence is DNGDDSDSDTDAAPDDADDSATDSDADSDD. Residues 105–117 show a composition bias toward basic and acidic residues; sequence EPRLLADDEHTSH. Acidic residues-rich tracts occupy residues 122-138 and 164-173; these read TYDD…DPDA and EDADFDDEDV. 6 consecutive transmembrane segments (helical) span residues 200–220, 276–296, 317–337, 357–377, 395–415, and 416–436; these read LAVV…GADI, VAGL…TYLF, LVLA…AIFA, FNLI…PLFV, RLLF…DPTG, and MAPI…LAAL.

Belongs to the TatC family. Forms a complex with TatA.

Its subcellular location is the cell membrane. In terms of biological role, part of the twin-arginine translocation (Tat) system that transports large folded proteins containing a characteristic twin-arginine motif in their signal peptide across membranes. The protein is Sec-independent protein translocase protein TatCo of Haloferax volcanii (strain ATCC 29605 / DSM 3757 / JCM 8879 / NBRC 14742 / NCIMB 2012 / VKM B-1768 / DS2) (Halobacterium volcanii).